The following is a 59-amino-acid chain: Large ribosomal subunit protein bL32 (59 aa).

The interval 1–59 (MAVQQNKKSPSKRGMHRSHDHLSAAPLAVEPTTGETHLRHHVSPNGYYRGRKVIKTKND) is disordered. Composition is skewed to basic residues over residues 9–19 (SPSKRGMHRSH) and 49–59 (RGRKVIKTKND).

The protein belongs to the bacterial ribosomal protein bL32 family.

The protein is Large ribosomal subunit protein bL32 of Cupriavidus necator (strain ATCC 17699 / DSM 428 / KCTC 22496 / NCIMB 10442 / H16 / Stanier 337) (Ralstonia eutropha).